The following is a 257-amino-acid chain: MTQHSRDTPQFYLTAPSPCPYLPDRSERKVFTHLVGEKAGELNDLLTHGGFRRSQSIAYRPACDQCRACVSVRVIADEFQLSRGARRVLARNADITGSLRAATPTSEQYSIFRAYLDQRHRHGGMADMTVLDYAMMVEDSHVETRIIEYRRRGADRVDNKRGDLVGVALTDVLSDGLSMVYSFFDPSEQNRSFGTFMILDHISRARQLGLPYVYLGYWIEGSRKMDYKGRFLPQQRLAPTGWLRVDADGETKHETTE.

This sequence belongs to the R-transferase family. Bpt subfamily.

It is found in the cytoplasm. It catalyses the reaction N-terminal L-glutamyl-[protein] + L-leucyl-tRNA(Leu) = N-terminal L-leucyl-L-glutamyl-[protein] + tRNA(Leu) + H(+). The catalysed reaction is N-terminal L-aspartyl-[protein] + L-leucyl-tRNA(Leu) = N-terminal L-leucyl-L-aspartyl-[protein] + tRNA(Leu) + H(+). Functionally, functions in the N-end rule pathway of protein degradation where it conjugates Leu from its aminoacyl-tRNA to the N-termini of proteins containing an N-terminal aspartate or glutamate. The polypeptide is Aspartate/glutamate leucyltransferase (Nitrobacter winogradskyi (strain ATCC 25391 / DSM 10237 / CIP 104748 / NCIMB 11846 / Nb-255)).